Consider the following 745-residue polypeptide: Ribosomal protein S6 kinase alpha-6 (745 aa).

Residues Met-1–Val-28 form a disordered region. The region spanning Phe-73–Phe-330 is the Protein kinase 1 domain. ATP contacts are provided by residues Leu-79–Val-87 and Lys-105. The Proton acceptor role is filled by Asp-198. Ser-232, Ser-372, and Ser-389 each carry phosphoserine. The 70-residue stretch at Ala-331–Lys-400 folds into the AGC-kinase C-terminal domain. One can recognise a Protein kinase 2 domain in the interval Tyr-426–Ile-683. ATP-binding positions include Ile-432–Cys-440 and Lys-455. Catalysis depends on Asp-543, which acts as the Proton acceptor. Thr-581 bears the Phosphothreonine mark.

It belongs to the protein kinase superfamily. AGC Ser/Thr protein kinase family. S6 kinase subfamily. As to quaternary structure, forms a complex with MAPK3/ERK1 but not with MAPK9 or MAPK14 in serum-starved cells. It depends on Mg(2+) as a cofactor. In terms of processing, phosphorylated at Ser-232, Ser-372, and Ser-389 in serum-starved cells.

It is found in the cytoplasm. The protein resides in the cytosol. It localises to the nucleus. The catalysed reaction is L-seryl-[protein] + ATP = O-phospho-L-seryl-[protein] + ADP + H(+). It carries out the reaction L-threonyl-[protein] + ATP = O-phospho-L-threonyl-[protein] + ADP + H(+). Constitutively activated by phosphorylation at Ser-232, Ser-372, and Ser-389 in serum-starved cells. Does not require growth factor stimulation for significant kinase activity. Constitutively active serine/threonine-protein kinase that exhibits growth-factor-independent kinase activity and that may participate in p53/TP53-dependent cell growth arrest signaling and play an inhibitory role during embryogenesis. This chain is Ribosomal protein S6 kinase alpha-6 (RPS6KA6), found in Homo sapiens (Human).